The primary structure comprises 397 residues: Ribosomal RNA large subunit methyltransferase I (397 aa).

In terms of domain architecture, PUA spans 2-80 (SAAIYLVKGR…QDINRAFFVK (79 aa)).

The protein belongs to the methyltransferase superfamily. RlmI family.

The protein resides in the cytoplasm. The enzyme catalyses cytidine(1962) in 23S rRNA + S-adenosyl-L-methionine = 5-methylcytidine(1962) in 23S rRNA + S-adenosyl-L-homocysteine + H(+). Its function is as follows. Specifically methylates the cytosine at position 1962 (m5C1962) of 23S rRNA. The protein is Ribosomal RNA large subunit methyltransferase I of Vibrio vulnificus (strain CMCP6).